We begin with the raw amino-acid sequence, 227 residues long: uncharacterized protein (227 aa).

A signal peptide spans 1 to 25; the sequence is MLIMKKLLLIAATSATMLSSSVSFA.

The protein to R.conorii RC1281.

This is an uncharacterized protein from Rickettsia conorii (strain ATCC VR-613 / Malish 7).